The following is a 156-amino-acid chain: Small ribosomal subunit protein uS7 (156 aa).

Belongs to the universal ribosomal protein uS7 family. Part of the 30S ribosomal subunit. Contacts proteins S9 and S11.

One of the primary rRNA binding proteins, it binds directly to 16S rRNA where it nucleates assembly of the head domain of the 30S subunit. Is located at the subunit interface close to the decoding center, probably blocks exit of the E-site tRNA. The chain is Small ribosomal subunit protein uS7 from Mycolicibacterium vanbaalenii (strain DSM 7251 / JCM 13017 / BCRC 16820 / KCTC 9966 / NRRL B-24157 / PYR-1) (Mycobacterium vanbaalenii).